The following is a 1050-amino-acid chain: Sentrin-specific protease 7 (1050 aa).

Disordered regions lie at residues 1–28 (MDKRKLGRRPSSSEIITEGKRKKSSSDL), 183–288 (PPVT…DVKY), and 304–365 (RRLR…KSDF). Residues Ser11, Ser12, Ser13, and Ser25 each carry the phosphoserine modification. The span at 196-211 (LQSEQLSSSSDGSLES) shows a compositional bias: low complexity. The segment covering 259-271 (ISDTQPEDLNSGS) has biased composition (polar residues). The span at 273–288 (GCDHLEQESRNKDVKY) shows a compositional bias: basic and acidic residues. Residues 310–320 (LPDSQYCTSLD) show a composition bias toward polar residues. Basic and acidic residues-rich tracts occupy residues 321–331 (KSTEQTKKQED) and 338–365 (EFEKPSENYHQDPKLPEEITTKPTKSDF). Residues Ser373, Ser433, Ser443, and Ser444 each carry the phosphoserine modification. A disordered region spans residues 443-476 (SSDEEGPVEHKSSEILKLQSKQDRETTNENESTS). A compositionally biased stretch (basic and acidic residues) spans 449–469 (PVEHKSSEILKLQSKQDRETT). The segment at 760-1050 (LGVTNEDLEC…HLQQQKGSSS (291 aa)) is protease. Catalysis depends on residues His860 and Asp939. Cys992 functions as the Nucleophile in the catalytic mechanism.

The protein belongs to the peptidase C48 family.

The protein localises to the cytoplasm. Protease that acts as a positive regulator of the cGAS-STING pathway by catalyzing desumoylation of CGAS. Desumoylation of CGAS promotes DNA-binding activity of CGAS, subsequent oligomerization and activation. Deconjugates SUMO2 and SUMO3 from targeted proteins, but not SUMO1. Catalyzes the deconjugation of poly-SUMO2 and poly-SUMO3 chains. Has very low efficiency in processing full-length SUMO proteins to their mature forms. The chain is Sentrin-specific protease 7 from Homo sapiens (Human).